A 63-amino-acid polypeptide reads, in one-letter code: uncharacterized protein (63 aa).

The helical transmembrane segment at 4-24 (LNQFILIFLLLIVILFIFFLI) threads the bilayer.

Its subcellular location is the membrane. This is an uncharacterized protein from Invertebrate iridescent virus 6 (IIV-6).